Here is a 557-residue protein sequence, read N- to C-terminus: Carboxypeptidase Y homolog A (557 aa).

Positions 1–17 are cleaved as a signal peptide; that stretch reads MRVLPAAMLVGAATAAV. A propeptide spanning residues 18–138 is cleaved from the precursor; that stretch reads PPFQQVLGGN…KLEAYDLRVK (121 aa). 5 disulfide bridges follow: Cys193–Cys433, Cys327–Cys341, Cys351–Cys374, Cys358–Cys367, and Cys396–Cys403. N-linked (GlcNAc...) asparagine glycosylation occurs at Asn224. The active site involves Ser280. Asp472 is an active-site residue. An N-linked (GlcNAc...) asparagine glycan is attached at Asn523. His534 is a catalytic residue.

The protein belongs to the peptidase S10 family.

The protein localises to the vacuole. It carries out the reaction Release of a C-terminal amino acid with broad specificity.. Its function is as follows. Vacuolar carboxypeptidase involved in degradation of small peptides. Digests preferentially peptides containing an aliphatic or hydrophobic residue in P1' position, as well as methionine, leucine or phenylalanine in P1 position of ester substrate. This is Carboxypeptidase Y homolog A (cpyA) from Aspergillus niger (strain ATCC MYA-4892 / CBS 513.88 / FGSC A1513).